Here is a 282-residue protein sequence, read N- to C-terminus: Bis(5'-nucleosyl)-tetraphosphatase, symmetrical (282 aa).

Belongs to the Ap4A hydrolase family.

The enzyme catalyses P(1),P(4)-bis(5'-adenosyl) tetraphosphate + H2O = 2 ADP + 2 H(+). In terms of biological role, hydrolyzes diadenosine 5',5'''-P1,P4-tetraphosphate to yield ADP. The sequence is that of Bis(5'-nucleosyl)-tetraphosphatase, symmetrical from Salmonella agona (strain SL483).